The primary structure comprises 238 residues: Cysteine-rich venom protein pseudechetoxin-like (238 aa).

Residues 1-19 form the signal peptide; the sequence is MIAFIVLLSLAAVLQQSSG. A propeptide spanning residues 20–28 is cleaved from the precursor; that stretch reads TVDFASESS. The SCP domain maps to 38–164; it reads VDKHNALRRS…STKYLYVCQY (127 aa). 8 disulfide bridges follow: Cys-75–Cys-153, Cys-92–Cys-165, Cys-148–Cys-162, Cys-184–Cys-191, Cys-187–Cys-196, Cys-200–Cys-233, Cys-209–Cys-227, and Cys-218–Cys-231. Residues 200–233 enclose the ShKT domain; that stretch reads CKYEDDFSNCKALAKNSKCQTEWIKSKCPAACFC.

Belongs to the CRISP family. In terms of tissue distribution, expressed by the venom gland.

Its subcellular location is the secreted. Blocks olfactory (CNGA2) and retinal (CNGA1) CNG channel currents. Does not affect neither depolarization- nor caffeine-induced contraction of smooth muscle. The protein is Cysteine-rich venom protein pseudechetoxin-like of Notechis scutatus scutatus (Mainland tiger snake).